The chain runs to 602 residues: MLSVIRVHLPSEIPIVGCELTPYVLLRRPDKTPSTDDVPESAPLEGHFLKYRWFRVQSDKKVAICSVHPSETATLQCLGCLKSKVPVAKSYHCSTKCFSDAWQHHRVLHERAASAATEGNDEEELPRLNSSGSGSGVLSTSVSLTNGSSSVYPSAITQKTGAGGETLVEVGRSKTYTPMADDICHVLKFECVVVNAETKQNVGLSCTILTSRVIPAPSPSPRRLISISGTDVTGHLDSNGRPLSMGTFTVLSYNILSDTYASSDIYSYCPTWALAWTYRRQNLLREIVKYRADIVCLQEVQNDHFEEFFLPELDKHGYQGLFKRKTNEVFIGNTNTIDGCATFFRRDRFSHVKKYEVEFNKAAQSLTEAIIPVSQKKNALNRLVKDNVALIVVLEAKFGSQAADNPGKRQLLCVANTHVNVPHELKDVKLWQVHTLLKGLEKIAASADIPMLVCGDFNTVPASAPHTLLAVGKVDPLHPDLMVDPLGILRPHSKLTHQLPLVSAYSQFAKMGGNVITEQQRRRLDPASSEPLFTNCTRDFIGTLDYIFYTADTLTVESLLELLDEESLRKDTALPSPEWSSDHIALLAEFRCMPRARRNNIL.

Residues 113 to 136 (ASAATEGNDEEELPRLNSSGSGSG) are disordered. E299 lines the Mg(2+) pocket.

This sequence belongs to the CCR4/nocturin family. In terms of assembly, component of the CCR4-NOT complex, at least composed of CRR4 and CAF1 proteins. The cofactor is Mg(2+).

It is found in the nucleus. It localises to the cytoplasm. It carries out the reaction Exonucleolytic cleavage of poly(A) to 5'-AMP.. Acts as a catalytic component of the CCR4-NOT core complex, which in the nucleus seems to be a general transcription factor, and in the cytoplasm the major mRNA deadenylase involved in mRNA turnover. In Arabidopsis thaliana (Mouse-ear cress), this protein is Carbon catabolite repressor protein 4 homolog 1 (CCR4-1).